The primary structure comprises 372 residues: NAD(P)H-quinone oxidoreductase subunit 1 (372 aa).

A run of 8 helical transmembrane segments spans residues 27–47 (AIWM…GVLV), 97–117 (WLFT…FLIV), 128–148 (VGMG…GLLM), 166–186 (AAQS…IAMM), 204–224 (ILGW…IAAL), 249–269 (YSGM…ILSS), 308–328 (SLGI…AILL), and 351–371 (VGLV…FAFG).

It belongs to the complex I subunit 1 family. In terms of assembly, NDH-1 is composed of at least 11 different subunits.

The protein localises to the cellular thylakoid membrane. The enzyme catalyses a plastoquinone + NADH + (n+1) H(+)(in) = a plastoquinol + NAD(+) + n H(+)(out). The catalysed reaction is a plastoquinone + NADPH + (n+1) H(+)(in) = a plastoquinol + NADP(+) + n H(+)(out). In terms of biological role, NDH-1 shuttles electrons from an unknown electron donor, via FMN and iron-sulfur (Fe-S) centers, to quinones in the respiratory and/or the photosynthetic chain. The immediate electron acceptor for the enzyme in this species is believed to be plastoquinone. Couples the redox reaction to proton translocation, and thus conserves the redox energy in a proton gradient. The chain is NAD(P)H-quinone oxidoreductase subunit 1 from Nostoc punctiforme (strain ATCC 29133 / PCC 73102).